The following is a 175-amino-acid chain: Protein LHCP TRANSLOCATION DEFECT (175 aa).

Residues 1–68 (MASSSISFSC…WFKFGKNGVD (68 aa)) constitute a chloroplast transit peptide. One copy of the ANK repeat lies at 117–149 (PVDILLMLAATEGDRPKIEELLKAGADYSVKDA).

In terms of assembly, interacts with CAO/cpSRP43, but is not a component of the transit complex. Interacts with LHCP (via T14 domain), TIC40 and TIC110. In terms of tissue distribution, highly expressed in leaves and seedlings. Detected in roots, but not in germinating seeds.

It localises to the plastid. The protein resides in the chloroplast thylakoid membrane. It is found in the chloroplast envelope. Its subcellular location is the chloroplast stroma. Functionally, involved in the import of light-harvesting complex proteins (LHCP) and subsequent routing of these proteins to the chloroplast signal recognition particle (SRP) pathway. The sequence is that of Protein LHCP TRANSLOCATION DEFECT (LTD) from Arabidopsis thaliana (Mouse-ear cress).